We begin with the raw amino-acid sequence, 173 residues long: Cytochrome c-type biogenesis protein CcmE (173 aa).

Residues 1–8 are Cytoplasmic-facing; sequence MNPRRKSR. Residues 9 to 29 traverse the membrane as a helical; Signal-anchor for type II membrane protein segment; the sequence is FKLVIFVVLGIAIASGLMLYA. Over 30-173 the chain is Periplasmic; the sequence is LRQNIDLFYT…RDRQEKEGAK (144 aa). Heme contacts are provided by histidine 131 and tyrosine 135. Residues 152–173 form a disordered region; that stretch reads GIKAADLKGESARDRQEKEGAK. Residues 156–173 show a composition bias toward basic and acidic residues; that stretch reads ADLKGESARDRQEKEGAK.

It belongs to the CcmE/CycJ family.

It localises to the cell inner membrane. In terms of biological role, heme chaperone required for the biogenesis of c-type cytochromes. Transiently binds heme delivered by CcmC and transfers the heme to apo-cytochromes in a process facilitated by CcmF and CcmH. The chain is Cytochrome c-type biogenesis protein CcmE from Haemophilus influenzae (strain PittEE).